A 645-amino-acid chain; its full sequence is Chaperone protein DnaK (645 aa).

Residue T199 is modified to Phosphothreonine; by autocatalysis. Disordered regions lie at residues 509-530 and 615-645; these read GALS…AEED and EAGA…EVKE. Positions 518 to 530 are enriched in basic and acidic residues; sequence QMQKDAEANAEED. Positions 615-626 are enriched in low complexity; sequence EAGADAAGAAGA. Positions 631 to 645 are enriched in acidic residues; it reads GDDDDAIDAEFEVKE.

This sequence belongs to the heat shock protein 70 family.

Its function is as follows. Acts as a chaperone. In Rhodopirellula baltica (strain DSM 10527 / NCIMB 13988 / SH1), this protein is Chaperone protein DnaK.